The following is a 269-amino-acid chain: Energy-coupling factor transporter transmembrane protein EcfT (269 aa).

6 consecutive transmembrane segments (helical) span residues 45–65, 75–95, 110–130, 153–173, 202–222, and 244–264; these read RFFLGWGVLLAFIVFLSRVSL, VLWLLVFTVLLHALFTPGEAI, MAALMGVRLVLLVAFAGLLTL, FPAHEMAMMMTIALRFIPTLL, FVPVLVPLFLIVFQRAEDLAL, and CLEDWVALGLMSVSVAGLLFL.

This sequence belongs to the energy-coupling factor EcfT family. As to quaternary structure, forms a stable energy-coupling factor (ECF) transporter complex composed of 2 membrane-embedded substrate-binding proteins (S component), 2 ATP-binding proteins (A component) and 2 transmembrane proteins (T component). May be able to interact with more than 1 S component at a time.

The protein resides in the cell membrane. Transmembrane (T) component of an energy-coupling factor (ECF) ABC-transporter complex. Unlike classic ABC transporters this ECF transporter provides the energy necessary to transport a number of different substrates. The protein is Energy-coupling factor transporter transmembrane protein EcfT of Thermanaerovibrio acidaminovorans (strain ATCC 49978 / DSM 6589 / Su883) (Selenomonas acidaminovorans).